Reading from the N-terminus, the 127-residue chain is MPFVQIHLRSGRSEVWLQKLSRTIHQSMIEEINVPEDDYFQVIRQYEKSEFFYDPFYLQVERTDELIYIHFTLKQSRTTEQKKALYRSIASRIHSELGVRKEDVFIMLAGNQDEDWSFGNGRAQMIE.

Pro-2 functions as the Proton acceptor; via imino nitrogen in the catalytic mechanism.

This sequence belongs to the 4-oxalocrotonate tautomerase family.

The protein is Probable tautomerase YusQ (yusQ) of Bacillus subtilis (strain 168).